Consider the following 930-residue polypeptide: Serine/threonine-protein kinase PknD (930 aa).

Residues 4–291 (YDIIRMIGKG…ALKADIEQHL (288 aa)) enclose the Protein kinase domain. ATP contacts are provided by residues 10 to 18 (IGKGGMGEV) and Lys33. Asp138 (proton acceptor) is an active-site residue.

The protein belongs to the protein kinase superfamily. Ser/Thr protein kinase family. In terms of processing, autophosphorylated on serine and threonine residues.

It carries out the reaction L-seryl-[protein] + ATP = O-phospho-L-seryl-[protein] + ADP + H(+). It catalyses the reaction L-threonyl-[protein] + ATP = O-phospho-L-threonyl-[protein] + ADP + H(+). Together with the serine/threonine kinase Pkn1, may play a role in the specific interactions with host proteins during intracellular growth. This is Serine/threonine-protein kinase PknD from Chlamydia caviae (strain ATCC VR-813 / DSM 19441 / 03DC25 / GPIC) (Chlamydophila caviae).